A 235-amino-acid chain; its full sequence is 5'-methylthioadenosine/S-adenosylhomocysteine nucleosidase (235 aa).

The active-site Proton acceptor is the Glu12. Substrate contacts are provided by residues Gly78, Met153, and 174 to 175 (ME). Residue Asp198 is the Proton donor of the active site.

Belongs to the PNP/UDP phosphorylase family. MtnN subfamily.

It catalyses the reaction S-adenosyl-L-homocysteine + H2O = S-(5-deoxy-D-ribos-5-yl)-L-homocysteine + adenine. The enzyme catalyses S-methyl-5'-thioadenosine + H2O = 5-(methylsulfanyl)-D-ribose + adenine. It carries out the reaction 5'-deoxyadenosine + H2O = 5-deoxy-D-ribose + adenine. The protein operates within amino-acid biosynthesis; L-methionine biosynthesis via salvage pathway; S-methyl-5-thio-alpha-D-ribose 1-phosphate from S-methyl-5'-thioadenosine (hydrolase route): step 1/2. Catalyzes the irreversible cleavage of the glycosidic bond in both 5'-methylthioadenosine (MTA) and S-adenosylhomocysteine (SAH/AdoHcy) to adenine and the corresponding thioribose, 5'-methylthioribose and S-ribosylhomocysteine, respectively. Also cleaves 5'-deoxyadenosine, a toxic by-product of radical S-adenosylmethionine (SAM) enzymes, into 5-deoxyribose and adenine. The protein is 5'-methylthioadenosine/S-adenosylhomocysteine nucleosidase of Geobacillus kaustophilus (strain HTA426).